The primary structure comprises 404 residues: Multidrug resistance protein MdtH (404 aa).

Residues 1 to 12 (MSRVSQARNLGK) are Cytoplasmic-facing. A helical transmembrane segment spans residues 13–33 (YFLLIDNMLVVLGFFVVFPLI). The Periplasmic portion of the chain corresponds to 34–98 (SIRFVDQMGW…GFATMGIAHE (65 aa)). The helical transmembrane segment at 99–116 (PWLLWFSCFLSGLGGTLF) threads the bilayer. The Cytoplasmic portion of the chain corresponds to 117 to 138 (DPPRSALVVKLIRPEQRGRFFS). Residues 139 to 159 (LLMMQDSAGAVIGALLGSWLL) traverse the membrane as a helical segment. The Periplasmic portion of the chain corresponds to 160 to 164 (QYDFR). A helical membrane pass occupies residues 165-185 (LVCAMGAILFIVCAIFNAWLL). The Cytoplasmic portion of the chain corresponds to 186-213 (PAWKLSTVRTPVREGMRRVISDKRFVTY). The helical transmembrane segment at 214–234 (VLTLAGYYMLAVQVMLMLPIM) threads the bilayer. The Periplasmic portion of the chain corresponds to 235–243 (VNDVAGSPA). A helical membrane pass occupies residues 244 to 264 (AVKWMYAIEACLSLTLLYPIA). Residues 265–276 (RWSEKRFRLEHR) are Cytoplasmic-facing. A helical transmembrane segment spans residues 277–297 (LMAGLLIMSLSMIPIGLAGNL). Over 298 to 299 (QQ) the chain is Periplasmic. The chain crosses the membrane as a helical span at residues 300-320 (LFTLICAFYIGSVIAEPARET). At 321–339 (LSASLTDARARGSYMGFSR) the chain is on the cytoplasmic side. A helical membrane pass occupies residues 340–360 (LGLAIGGAIGYIGGGWLFDMG). Over 361–367 (KTLAQPE) the chain is Periplasmic. The helical transmembrane segment at 368–388 (LPWMMLGIIGFITFLALGWQF) threads the bilayer. At 389–404 (SHKRTPRQYTGARRLI) the chain is on the cytoplasmic side.

The protein belongs to the major facilitator superfamily. DHA1 family. MdtH (TC 2.A.1.2.21) subfamily.

It is found in the cell inner membrane. This chain is Multidrug resistance protein MdtH, found in Salmonella arizonae (strain ATCC BAA-731 / CDC346-86 / RSK2980).